A 456-amino-acid polypeptide reads, in one-letter code: Histidine--tRNA ligase (456 aa).

It belongs to the class-II aminoacyl-tRNA synthetase family. As to quaternary structure, homodimer.

It localises to the cytoplasm. It carries out the reaction tRNA(His) + L-histidine + ATP = L-histidyl-tRNA(His) + AMP + diphosphate + H(+). This is Histidine--tRNA ligase from Borreliella afzelii (strain PKo) (Borrelia afzelii).